The primary structure comprises 304 residues: MRSSSTLLIAFGLFLASMSVEAIIRPGYGSGGHRPPSSYHGGHHNDDDCTTKPPKSTSTPSTSTSTPTTTTTTTTTTTTTPTTTTTTTTTTTPEPTTTKVKVCPQGYTSFLRTPAADNSFTSEWCMQLIWSPRQPMPINNASALCQASNTEAVVTTFANEEELNVFSLQMAQQFDRVGPATRGAIAVDGRRIAACVSRDRGILDSEECNGTNSFVMVDKHTSPGFTWSKWATNEPSANAWTYDIEQCIQFTVYPALTGPGDNPYNMLNRNNKFNDIYCNMDKAPNEPTNTAYWNFGALCGVLPS.

An N-terminal signal peptide occupies residues 1 to 19; that stretch reads MRSSSTLLIAFGLFLASMS. Positions 29–100 are disordered; the sequence is GSGGHRPPSS…TTPEPTTTKV (72 aa). Positions 51 to 99 are enriched in low complexity; the sequence is TKPPKSTSTPSTSTSTPTTTTTTTTTTTTTPTTTTTTTTTTTPEPTTTK.

This is C-type lectin domain-containing protein 141 (clec-141) from Caenorhabditis elegans.